The primary structure comprises 374 residues: U-box domain-containing protein 8 (374 aa).

The region spanning 4–79 (DLPNDFRCPI…LNFAHVSLKE (76 aa)) is the U-box domain. 5 ARM repeats span residues 126-165 (SSIR…NLSL), 167-206 (DDNK…SLAV), 208-248 (EVNK…ALCS), 250-288 (PDNR…KCRG), and 289-327 (GREE…CLCC).

Expressed in the whole plant.

The enzyme catalyses S-ubiquitinyl-[E2 ubiquitin-conjugating enzyme]-L-cysteine + [acceptor protein]-L-lysine = [E2 ubiquitin-conjugating enzyme]-L-cysteine + N(6)-ubiquitinyl-[acceptor protein]-L-lysine.. It participates in protein modification; protein ubiquitination. Its function is as follows. Functions as an E3 ubiquitin ligase. Involved in the age-dependent pseudo-self-compatibility process. This Arabidopsis thaliana (Mouse-ear cress) protein is U-box domain-containing protein 8 (PUB8).